Consider the following 186-residue polypeptide: Adenylate kinase (186 aa).

Residue 11-16 coordinates ATP; the sequence is GAGKGT. Residues 31–60 form an NMP region; that stretch reads STGDILRAAVKNGTAMGIEAKKYMDAGDLV. AMP contacts are provided by residues T32, R37, 58 to 60, 86 to 89, and Q93; these read DLV and GFPR. The LID stretch occupies residues 127-137; sequence GRAIKEGRSDD. Residue R128 participates in ATP binding. AMP-binding residues include R134 and R145. G173 contributes to the ATP binding site.

It belongs to the adenylate kinase family. In terms of assembly, monomer.

Its subcellular location is the cytoplasm. The enzyme catalyses AMP + ATP = 2 ADP. Its pathway is purine metabolism; AMP biosynthesis via salvage pathway; AMP from ADP: step 1/1. Catalyzes the reversible transfer of the terminal phosphate group between ATP and AMP. Plays an important role in cellular energy homeostasis and in adenine nucleotide metabolism. The sequence is that of Adenylate kinase from Leptospira biflexa serovar Patoc (strain Patoc 1 / Ames).